The following is an 861-amino-acid chain: 1,4-alpha-glucan-branching enzyme (861 aa).

Trp-173 and Lys-208 together coordinate (1,4-alpha-D-glucosyl)n. The Nucleophile role is filled by Asp-429. Glu-484 acts as the Proton donor in catalysis.

It belongs to the glycosyl hydrolase 13 family. GlgB subfamily. In terms of assembly, monomer.

The protein resides in the plastid. It localises to the chloroplast. Its subcellular location is the amyloplast. The enzyme catalyses Transfers a segment of a (1-&gt;4)-alpha-D-glucan chain to a primary hydroxy group in a similar glucan chain.. It participates in glycan biosynthesis; starch biosynthesis. Functionally, catalyzes the formation of the alpha-1,6-glucosidic linkages in starch by scission of a 1,4-alpha-linked oligosaccharide from growing alpha-1,4-glucan chains and the subsequent attachment of the oligosaccharide to the alpha-1,6 position. The sequence is that of 1,4-alpha-glucan-branching enzyme (SBE1) from Solanum tuberosum (Potato).